We begin with the raw amino-acid sequence, 329 residues long: uncharacterized protein (329 aa).

The SIS domain occupies 38-184 (IVKLILKSQE…MACLMRAKNF (147 aa)). 56 to 61 (GVGKSA) is a binding site for ATP. 2 CBS domains span residues 211-267 (QTTN…GVSL) and 270-329 (EVRH…GLKA).

This sequence belongs to the SIS family. GutQ/KpsF subfamily.

This is an uncharacterized protein from Helicobacter pylori (strain ATCC 700392 / 26695) (Campylobacter pylori).